The sequence spans 400 residues: Tryptophan synthase beta chain (400 aa).

Lys-90 bears the N6-(pyridoxal phosphate)lysine mark.

This sequence belongs to the TrpB family. As to quaternary structure, tetramer of two alpha and two beta chains. The cofactor is pyridoxal 5'-phosphate.

It carries out the reaction (1S,2R)-1-C-(indol-3-yl)glycerol 3-phosphate + L-serine = D-glyceraldehyde 3-phosphate + L-tryptophan + H2O. It functions in the pathway amino-acid biosynthesis; L-tryptophan biosynthesis; L-tryptophan from chorismate: step 5/5. The beta subunit is responsible for the synthesis of L-tryptophan from indole and L-serine. In Alkaliphilus metalliredigens (strain QYMF), this protein is Tryptophan synthase beta chain.